Reading from the N-terminus, the 113-residue chain is Fruiting body-specific class I hydrophobin fbh1 (113 aa).

Positions 1–23 are cleaved as a signal peptide; that stretch reads MFSIRIATVVLAASAALRPPARI. 4 disulfides stabilise this stretch: cysteine 33/cysteine 92, cysteine 40/cysteine 86, cysteine 41/cysteine 73, and cysteine 93/cysteine 106.

The protein belongs to the fungal hydrophobin family. In terms of assembly, self-assembles to form functional amyloid fibrils called rodlets. Self-assembly into fibrillar rodlets occurs spontaneously at hydrophobic:hydrophilic interfaces and the rodlets further associate laterally to form amphipathic monolayers.

The protein resides in the secreted. It localises to the cell wall. In terms of biological role, aerial growth, conidiation, and dispersal of filamentous fungi in the environment rely upon a capability of their secreting small amphipathic proteins called hydrophobins (HPBs) with low sequence identity. Class I can self-assemble into an outermost layer of rodlet bundles on aerial cell surfaces, conferring cellular hydrophobicity that supports fungal growth, development and dispersal; whereas Class II form highly ordered films at water-air interfaces through intermolecular interactions but contribute nothing to the rodlet structure. Fbh1 is a fruiting body-specific class I hydrophobin that is involved in the growth rate and primordia formation. The sequence is that of Fruiting body-specific class I hydrophobin fbh1 from Pleurotus ostreatus (Oyster mushroom).